Here is a 485-residue protein sequence, read N- to C-terminus: MIFKFFFIFFLIILVIKISESVDSTVNVHLIKSRTELAYSFKESLSFKTISFDDESNKIDYDEFLKFHNFLQNKFPIIHRVLKRTVINKYSLLFEWTGSDKTLKPLLLNSHYDVVPVTESEWTFNPWGEIRNDNIYGRGSIDNKVIVMATMESIEAILANNYTQPIRTIYLCFGHDEELGGLNGHRMIARHFRENLVRAEAIFDEGCPFLASNFVPGFHDIIAGVGVFEKGYLFYKLTSKVNSFTHSAIPPKESAIGILSKALAKIESNPFAPIENIEKKNQLLQLFNGETIKSNPFLDAMTKTTTALSMIHAGTKPNIIPTTASAWVSHRIINGNSIEYVKSRILDLINDTRITMEIEGFLEPSPISSPFTTAYQILKQTIYQQFGGYNVKVVPTQLMANTDTRHYWDITDNIYRFMPIVGNFMDFVSIHGSNEKISIDDYIKTIHFYKKLILNFQPFSNSSNSNYINKNLKINDYCPNSIYSK.

An N-terminal signal peptide occupies residues 1–21 (MIFKFFFIFFLIILVIKISES). A Zn(2+)-binding site is contributed by His-111. Asp-113 is an active-site residue. Asp-142 lines the Zn(2+) pocket. The Proton acceptor role is filled by Glu-177. 3 residues coordinate Zn(2+): Glu-178, Asp-204, and His-431.

This sequence belongs to the peptidase M20A family. Zn(2+) is required as a cofactor.

It is found in the secreted. The chain is Probable carboxypeptidase S-like 1 from Dictyostelium discoideum (Social amoeba).